A 243-amino-acid polypeptide reads, in one-letter code: Biosynthetic peptidoglycan transglycosylase (243 aa).

A helical transmembrane segment spans residues 21-43 (LLIVSLVSALMSVLQVIVFRFVD).

It belongs to the glycosyltransferase 51 family.

Its subcellular location is the cell inner membrane. It catalyses the reaction [GlcNAc-(1-&gt;4)-Mur2Ac(oyl-L-Ala-gamma-D-Glu-L-Lys-D-Ala-D-Ala)](n)-di-trans,octa-cis-undecaprenyl diphosphate + beta-D-GlcNAc-(1-&gt;4)-Mur2Ac(oyl-L-Ala-gamma-D-Glu-L-Lys-D-Ala-D-Ala)-di-trans,octa-cis-undecaprenyl diphosphate = [GlcNAc-(1-&gt;4)-Mur2Ac(oyl-L-Ala-gamma-D-Glu-L-Lys-D-Ala-D-Ala)](n+1)-di-trans,octa-cis-undecaprenyl diphosphate + di-trans,octa-cis-undecaprenyl diphosphate + H(+). It participates in cell wall biogenesis; peptidoglycan biosynthesis. Peptidoglycan polymerase that catalyzes glycan chain elongation from lipid-linked precursors. This is Biosynthetic peptidoglycan transglycosylase from Xylella fastidiosa (strain Temecula1 / ATCC 700964).